Reading from the N-terminus, the 611-residue chain is Probable potassium transport system protein Kup 1 (611 aa).

Helical transmembrane passes span 6-26 (LMVG…LYTM), 44-64 (MLSL…VAVV), 90-110 (LGVI…GAIT), 129-149 (ISPY…ALQA), 158-178 (LFGP…LFGI), 193-213 (GLSY…AVFL), 237-257 (WYGL…AVVV), 280-300 (LVAL…SGAF), 328-348 (IYIG…TLGF), 354-374 (LAAA…ILMF), 385-405 (LAAS…FVSA), and 410-430 (VLEG…LMMT).

This sequence belongs to the HAK/KUP transporter (TC 2.A.72) family.

Its subcellular location is the cell inner membrane. It carries out the reaction K(+)(in) + H(+)(in) = K(+)(out) + H(+)(out). Functionally, transport of potassium into the cell. Likely operates as a K(+):H(+) symporter. This chain is Probable potassium transport system protein Kup 1, found in Bradyrhizobium sp. (strain BTAi1 / ATCC BAA-1182).